The sequence spans 4776 residues: Pneumococcal serine-rich repeat protein (4776 aa).

The first 72 residues, 1 to 72 (MTETVEDKVS…VVLGTISTSN (72 aa)), serve as a signal peptide directing secretion. Residues serine 73, serine 75, serine 76, serine 78, serine 80, serine 82, serine 94, serine 100, serine 108, serine 110, serine 118, serine 120, and serine 121 are each glycosylated (O-linked (GlcNAc...) serine). The serine-rich repeat region 1, SRR1 stretch occupies residues 73–121 (SASSTSLSASESASTSASESASTSASTSASTSASESASTSASTSISASS). Residues 86-112 (STSASESASTSASTSASTSASESASTS) are disordered. The tract at residues 122 to 166 (TVVGSQTAAATEATAKKVEEDRKKPASDYVASVTNVNLQSYAKRR) is self aggregating domain. A basic region, BR region spans residues 122-394 (TVVGSQTAAA…QSKSLSVSAS (273 aa)). Positions 164-168 (KRRKR) match the Host furin cleavage recognition motif. Residues 273–341 (TQTMLTLGSD…GYGLTSSWTV (69 aa)) form a keratin 10-binding domain, cell-type specific binding to lung-derived cells region. Positions 395 to 4712 (QSASASASTS…ASTSASASAS (4318 aa)) are serine-rich repeat region 2, SRR2. 27 disordered regions span residues 481-627 (ASTS…STSA), 861-889 (ASAS…SAST), 925-965 (ASAS…SASA), 1052-1085 (SAST…SASA), 1123-1153 (ASAS…STSA), 1171-1199 (ASAS…STSA), 1311-1357 (ASES…SAST), 1671-1731 (ASES…SESA), 1792-1863 (SASE…STSA), 2105-2133 (ASAS…SAST), 2169-2209 (ASAS…SASA), 2296-2329 (SAST…SASA), 2367-2397 (ASAS…STSA), 2415-2443 (ASAS…STSA), 2571-2631 (ASES…SESA), 2737-2805 (ESAS…STSA), 2855-3113 (ASAS…STSA), 3347-3375 (ASAS…SAST), 3411-3451 (ASAS…SASA), 3538-3571 (SAST…SASA), 3609-3639 (ASAS…STSA), 3657-3685 (ASAS…STSA), 3797-3843 (ASES…SAST), 4167-4197 (ASAS…STSA), 4215-4243 (ASAS…STSA), 4355-4401 (ASES…SAST), and 4706-4747 (SASA…GTES). The span at 4715–4747 (VSNSANHSNSQVGNTSGSTGKSQKELPNTGTES) shows a compositional bias: polar residues. Positions 4740–4744 (LPNTG) match the LPXTG sorting signal motif. The residue at position 4743 (threonine 4743) is a Pentaglycyl murein peptidoglycan amidated threonine. Residues 4744–4776 (GTESSIGSVLLGVLAAVTGIGLVAKRRKRDEEE) constitute a propeptide, removed by sortase.

It belongs to the serine-rich repeat protein (SRRP) family. In terms of assembly, binds to human and mouse protein keratin 10 (KRT10). Post-translationally, glycosylated. Only truncated substrates greater than 25 residues long are glycosylated by the Gtf1-Gtf2 complex in vitro; only Ser residues have been seen to be glycosylated. Based on electrophoretic mobility it is probable that most of the Ser residues in SSR1 and SSR2 are O-GlcNAcylated. Subsequent glycosylation by up to 7 sugar transferases (Gtf3 and GlyAT, GlyB, GlyD, GlyE, GlyF and GlyG) is able to generate very high sugar polymorphism. In terms of processing, can be cleaved by human furin protease; this fragment contributes to self-aggregation and possibly biofilm formation in vitro.

It localises to the secreted. Its subcellular location is the cell wall. It is found in the cell surface. Its function is as follows. Protein that allows bacteria to adhere to mammalian host cells. Required for full virulence in mouse infection models when infected intranasally. Required for adhesion to host cells in vitro and for persistence in the lower respiratory tract. Binds host keratin 10 (KRT10) on lung cells which mediates adhesion via the C-terminus of the basic region (BR, residues 273-341); glycosylation of either protein is not required for the interaction. A region in the N-terminus (residues 122-166) self aggregates, contributing to mature biofilm formation. The basic region (BR, residues 187-385) also self aggregates; the BR binds DNA which enhances self aggregation. The polypeptide is Pneumococcal serine-rich repeat protein (Streptococcus pneumoniae serotype 4 (strain ATCC BAA-334 / TIGR4)).